The chain runs to 1456 residues: Sterol 3-beta-glucosyltransferase (1456 aa).

Acidic residues predominate over residues E60–E70. 2 disordered regions span residues E60 to H113 and L128 to E156. Residues T71–P104 show a composition bias toward low complexity. The segment covering S137–S146 has biased composition (basic and acidic residues). The 48-residue stretch at Q200–R247 folds into the GRAM 1 domain. A PH domain is found at A251–F351. Disordered stretches follow at residues H462–P512 and D524–F776. Residues Q496 to L508 show a composition bias toward basic and acidic residues. The segment covering L556 to F567 has biased composition (polar residues). Composition is skewed to low complexity over residues S576–A606 and G647–G676. Over residues T677–G696 the composition is skewed to gly residues. A compositionally biased stretch (low complexity) spans A719–P735. Residues E827–S893 form the GRAM 2 domain. Positions 1004, 1005, 1007, 1279, 1307, 1310, 1323, 1326, 1327, 1328, 1347, and 1348 each coordinate UDP-alpha-D-glucose.

Belongs to the glycosyltransferase 28 family.

The protein localises to the cytoplasm. Its subcellular location is the membrane. The catalysed reaction is a sterol + UDP-alpha-D-glucose = a sterol 3-beta-D-glucoside + UDP + H(+). The enzyme catalyses ergosterol + UDP-alpha-D-glucose = ergosteryl 3-beta-D-glucoside + UDP + H(+). Its function is as follows. Sterol glycosyltransferase responsible for the glycosylation of ergosterol to form ergosterol-glucoside. The polypeptide is Sterol 3-beta-glucosyltransferase (Yarrowia lipolytica (strain CLIB 122 / E 150) (Yeast)).